Reading from the N-terminus, the 591-residue chain is L-fucose isomerase (591 aa).

Catalysis depends on proton acceptor residues glutamate 337 and aspartate 361. Positions 337, 361, and 528 each coordinate Mn(2+).

Belongs to the L-fucose isomerase family. In terms of assembly, homohexamer. It depends on Mn(2+) as a cofactor.

It is found in the cytoplasm. It carries out the reaction L-fucose = L-fuculose. It participates in carbohydrate degradation; L-fucose degradation; L-lactaldehyde and glycerone phosphate from L-fucose: step 1/3. In terms of biological role, converts the aldose L-fucose into the corresponding ketose L-fuculose. The chain is L-fucose isomerase from Salmonella choleraesuis (strain SC-B67).